A 168-amino-acid polypeptide reads, in one-letter code: Putative apoptosis regulator A9 (168 aa).

A helical transmembrane segment spans residues 143-162 (SAFYFLTAAASCLTLLLLYF).

The protein resides in the host membrane. Its function is as follows. Suppresses apoptosis in host cell and thus facilitates production of progeny virions. This chain is Putative apoptosis regulator A9 (A9), found in Alcelaphine herpesvirus 1 (strain C500) (AlHV-1).